Consider the following 316-residue polypeptide: Transaldolase (316 aa).

Lys125 serves as the catalytic Schiff-base intermediate with substrate.

This sequence belongs to the transaldolase family. Type 1 subfamily. As to quaternary structure, homodimer.

The protein resides in the cytoplasm. The catalysed reaction is D-sedoheptulose 7-phosphate + D-glyceraldehyde 3-phosphate = D-erythrose 4-phosphate + beta-D-fructose 6-phosphate. It functions in the pathway carbohydrate degradation; pentose phosphate pathway; D-glyceraldehyde 3-phosphate and beta-D-fructose 6-phosphate from D-ribose 5-phosphate and D-xylulose 5-phosphate (non-oxidative stage): step 2/3. Its function is as follows. Transaldolase is important for the balance of metabolites in the pentose-phosphate pathway. The chain is Transaldolase from Verminephrobacter eiseniae (strain EF01-2).